Here is a 222-residue protein sequence, read N- to C-terminus: Putative thymidylate synthase (222 aa).

Cysteine 146 is an active-site residue.

The protein belongs to the thymidylate synthase family. Archaeal-type ThyA subfamily. In terms of assembly, monomer.

The protein localises to the cytoplasm. It participates in pyrimidine metabolism; dTTP biosynthesis. Its function is as follows. May catalyze the biosynthesis of dTMP using an unknown cosubstrate. This Methanothermobacter thermautotrophicus (strain ATCC 29096 / DSM 1053 / JCM 10044 / NBRC 100330 / Delta H) (Methanobacterium thermoautotrophicum) protein is Putative thymidylate synthase.